The primary structure comprises 367 residues: Developmentally-regulated GTP-binding protein 1 (367 aa).

Serine 2 carries the N-acetylserine modification. The segment at 2 to 16 is required for interaction with STK16; it reads SSTLAKIAEIEAEMA. At lysine 22 the chain carries (3S)-3-hydroxylysine. The OBG-type G domain occupies 65-290; the sequence is ARIGFVGFPS…LLEKIWDYLK (226 aa). GTP contacts are provided by residues 71 to 78, 96 to 100, 117 to 120, 248 to 251, and 271 to 273; these read GFPSVGKS, FTTLT, DLPG, NKID, and SAH. Mg(2+)-binding residues include serine 78 and threonine 98. Threonine 100 carries the phosphothreonine; by STK16 modification. Residues 290 to 366 form the TGS domain; the sequence is KLVRIYTKPK…EDEDVIQIVK (77 aa).

This sequence belongs to the TRAFAC class OBG-HflX-like GTPase superfamily. OBG GTPase family. In terms of assembly, interacts (via its C-terminal) with TAL1. Interacts with DFRP1/ZC3H15; this interaction prevents DRG1 poly-ubiquitination and degradation by proteasome. DRG1-ZC3H15/DFRP1 complex co-sediments with polysomes. Interacts with STK16. Interacts with JMJD7. Sumoylated by UBE2I in response to MEKK1-mediated stimuli. In terms of processing, hydroxylated (with S stereochemistry) at C-3 of Lys-22 by JMJD7. Post-translationally, phosphorylated at Thr-100 by STK16. Polyubiquitinated; this modification induces proteolytic degradation and is impaired by interaction with ZC3H15.

The protein resides in the nucleus. The protein localises to the cytoplasm. The enzyme catalyses GTP + H2O = GDP + phosphate + H(+). The GTPase activity is enhanced by potassium ions as well as by DFRP1 binding. Its function is as follows. Catalyzes the conversion of GTP to GDP through hydrolysis of the gamma-phosphate bond in GTP. Appears to have an intrinsic GTPase activity that is stimulated by ZC3H15/DFRP1 binding likely by increasing the affinity for the potassium ions. When hydroxylated at C-3 of 'Lys-22' by JMJD7, may bind to RNA and play a role in translation. Binds to microtubules and promotes microtubule polymerization and bundling that are required for mitotic spindle assembly during prophase to anaphase transition. GTPase activity is not necessary for these microtubule-related functions. This chain is Developmentally-regulated GTP-binding protein 1 (DRG1), found in Bos taurus (Bovine).